The chain runs to 270 residues: 4-hydroxy-tetrahydrodipicolinate reductase (270 aa).

NAD(+) is bound by residues 11 to 16 (GAGGRM) and E37. Position 38 (R38) interacts with NADP(+). Residues 101–103 (GTT) and 125–128 (APNM) contribute to the NAD(+) site. H158 serves as the catalytic Proton donor/acceptor. (S)-2,3,4,5-tetrahydrodipicolinate is bound at residue H159. K162 functions as the Proton donor in the catalytic mechanism. Position 168–169 (168–169 (GT)) interacts with (S)-2,3,4,5-tetrahydrodipicolinate.

Belongs to the DapB family.

The protein resides in the cytoplasm. It carries out the reaction (S)-2,3,4,5-tetrahydrodipicolinate + NAD(+) + H2O = (2S,4S)-4-hydroxy-2,3,4,5-tetrahydrodipicolinate + NADH + H(+). The catalysed reaction is (S)-2,3,4,5-tetrahydrodipicolinate + NADP(+) + H2O = (2S,4S)-4-hydroxy-2,3,4,5-tetrahydrodipicolinate + NADPH + H(+). It participates in amino-acid biosynthesis; L-lysine biosynthesis via DAP pathway; (S)-tetrahydrodipicolinate from L-aspartate: step 4/4. In terms of biological role, catalyzes the conversion of 4-hydroxy-tetrahydrodipicolinate (HTPA) to tetrahydrodipicolinate. The protein is 4-hydroxy-tetrahydrodipicolinate reductase of Shewanella sp. (strain MR-4).